The sequence spans 131 residues: ATP synthase epsilon chain (131 aa).

This sequence belongs to the ATPase epsilon chain family. F-type ATPases have 2 components, CF(1) - the catalytic core - and CF(0) - the membrane proton channel. CF(1) has five subunits: alpha(3), beta(3), gamma(1), delta(1), epsilon(1). CF(0) has three main subunits: a, b and c.

It is found in the cell membrane. Functionally, produces ATP from ADP in the presence of a proton gradient across the membrane. The polypeptide is ATP synthase epsilon chain (Bacillus licheniformis (strain ATCC 14580 / DSM 13 / JCM 2505 / CCUG 7422 / NBRC 12200 / NCIMB 9375 / NCTC 10341 / NRRL NRS-1264 / Gibson 46)).